A 167-amino-acid chain; its full sequence is I-Kappa-B like protein I1 (167 aa).

3 ANK repeats span residues 54–86, 91–121, and 125–154; these read HGKQ…DING, FGNT…NMGI, and LFKT…QCRI.

This sequence belongs to the polydnaviridae I-Kappa-B-like protein family.

Functionally, suppresses the host immune response through NF-kappa-B inactivation. Possesses ankyrin repeat domains required for NF-kappa-B binding but lacks the regulatory regions required for dissociation from NF-kappa-B and degradation. Therefore, prevents host NF-kappa-B release and subsequent activation. This chain is I-Kappa-B like protein I1 (I1), found in Microplitis demolitor (Parasitoid wasp).